The primary structure comprises 393 residues: NAD(P)H-quinone oxidoreductase subunit H, chloroplastic (393 aa).

It belongs to the complex I 49 kDa subunit family. In terms of assembly, NDH is composed of at least 16 different subunits, 5 of which are encoded in the nucleus.

The protein localises to the plastid. Its subcellular location is the chloroplast thylakoid membrane. The enzyme catalyses a plastoquinone + NADH + (n+1) H(+)(in) = a plastoquinol + NAD(+) + n H(+)(out). It catalyses the reaction a plastoquinone + NADPH + (n+1) H(+)(in) = a plastoquinol + NADP(+) + n H(+)(out). NDH shuttles electrons from NAD(P)H:plastoquinone, via FMN and iron-sulfur (Fe-S) centers, to quinones in the photosynthetic chain and possibly in a chloroplast respiratory chain. The immediate electron acceptor for the enzyme in this species is believed to be plastoquinone. Couples the redox reaction to proton translocation, and thus conserves the redox energy in a proton gradient. This is NAD(P)H-quinone oxidoreductase subunit H, chloroplastic from Guizotia abyssinica (Niger).